Consider the following 455-residue polypeptide: Probable glycine dehydrogenase (decarboxylating) subunit 1 (455 aa).

This sequence belongs to the GcvP family. N-terminal subunit subfamily. In terms of assembly, the glycine cleavage system is composed of four proteins: P, T, L and H. In this organism, the P 'protein' is a heterodimer of two subunits.

The catalysed reaction is N(6)-[(R)-lipoyl]-L-lysyl-[glycine-cleavage complex H protein] + glycine + H(+) = N(6)-[(R)-S(8)-aminomethyldihydrolipoyl]-L-lysyl-[glycine-cleavage complex H protein] + CO2. The glycine cleavage system catalyzes the degradation of glycine. The P protein binds the alpha-amino group of glycine through its pyridoxal phosphate cofactor; CO(2) is released and the remaining methylamine moiety is then transferred to the lipoamide cofactor of the H protein. This is Probable glycine dehydrogenase (decarboxylating) subunit 1 from Saccharolobus solfataricus (strain ATCC 35092 / DSM 1617 / JCM 11322 / P2) (Sulfolobus solfataricus).